Consider the following 202-residue polypeptide: NAD(P)H dehydrogenase (quinone) (202 aa).

Residues 7–193 (VLVLYYSMYG…TIARFQGRHF (187 aa)) form the Flavodoxin-like domain. FMN-binding positions include 13–18 (SMYGHI) and 82–84 (TRF). An NAD(+)-binding site is contributed by Y15. Substrate is bound at residue W102. Residues 117-122 (STATGG) and H137 contribute to the FMN site.

This sequence belongs to the WrbA family. FMN serves as cofactor.

It catalyses the reaction a quinone + NADH + H(+) = a quinol + NAD(+). The catalysed reaction is a quinone + NADPH + H(+) = a quinol + NADP(+). In Rhodospirillum rubrum (strain ATCC 11170 / ATH 1.1.1 / DSM 467 / LMG 4362 / NCIMB 8255 / S1), this protein is NAD(P)H dehydrogenase (quinone).